Reading from the N-terminus, the 56-residue chain is Small ribosomal subunit protein uS14z/uS14y/uS14x (56 aa).

Zn(2+) contacts are provided by C21, C24, C39, and C42.

This sequence belongs to the universal ribosomal protein uS14 family. Requires Zn(2+) as cofactor.

The polypeptide is Small ribosomal subunit protein uS14z/uS14y/uS14x (RPS29A) (Arabidopsis thaliana (Mouse-ear cress)).